The chain runs to 751 residues: Phosphate transporter PHO1 homolog 8 (751 aa).

The SPX domain maps to 1-299; that stretch reads MKFGKEYVAQ…LRNAAKLYME (299 aa). Over 1 to 351 the chain is Cytoplasmic; that stretch reads MKFGKEYVAQ…KVTKEKHRIT (351 aa). A helical transmembrane segment spans residues 352-372; sequence FSTGFFVGCTVSLVIALGLFI. Residues 373-392 lie on the Extracellular side of the membrane; it reads HARNIMGAVGHKLYMETMFP. The chain crosses the membrane as a helical span at residues 393-413; it reads LYSLFAFVVLHMIMYASNIYF. Topologically, residues 414–434 are cytoplasmic; sequence WKRYRVNYPFIFGFKEGTELG. A helical transmembrane segment spans residues 435 to 455; it reads YGHVLLLSFGLGTLALCAVLV. The Extracellular segment spans residues 456-473; that stretch reads NMDMEMDPNTNDYKTITE. Residues 474-494 form a helical membrane-spanning segment; the sequence is LVPLFVVALVIAISVCPFNIF. Topologically, residues 495-623 are cytoplasmic; that stretch reads YRSSRFFFLM…FSINRGNDWK (129 aa). The EXS domain occupies 558–751; that stretch reads KSSDVYSTFY…NYDEEEDRDS (194 aa). A helical transmembrane segment spans residues 624 to 644; the sequence is IAAWVFSGLATFYGTYWDIVY. Residues 645–667 lie on the Extracellular side of the membrane; the sequence is DWGLLHRPSKSWLREKLLVPHKS. The chain crosses the membrane as a helical span at residues 668–688; the sequence is VYYVAMVVNVVLRLAWLQTVL. At 689–751 the chain is on the cytoplasmic side; it reads DFNISFLHRE…NYDEEEDRDS (63 aa).

Belongs to the SYG1 (TC 2.A.94) family. As to expression, expressed in root epidermis, leaf hydathodes, trichomes and petioles, stem vascular cylinder, receptacle, stigma apex and pollen grains.

It is found in the cell membrane. Its function is as follows. May transport inorganic phosphate (Pi). This chain is Phosphate transporter PHO1 homolog 8 (PHO1-H8), found in Arabidopsis thaliana (Mouse-ear cress).